The primary structure comprises 275 residues: Polyamine aminopropyltransferase 1 (275 aa).

The 234-residue stretch at 2–235 folds into the PABS domain; that stretch reads ELWFTEKQTK…GLWTFTIGSK (234 aa). Gln31 contributes to the S-methyl-5'-thioadenosine binding site. 2 residues coordinate spermidine: His62 and Asp86. S-methyl-5'-thioadenosine is bound by residues Glu106 and 137–138; that span reads DG. Asp155 (proton acceptor) is an active-site residue. Position 155–158 (155–158) interacts with spermidine; that stretch reads DSTE. S-methyl-5'-thioadenosine is bound at residue Pro162.

Belongs to the spermidine/spermine synthase family. As to quaternary structure, homodimer or homotetramer.

The protein resides in the cytoplasm. It catalyses the reaction S-adenosyl 3-(methylsulfanyl)propylamine + putrescine = S-methyl-5'-thioadenosine + spermidine + H(+). Its pathway is amine and polyamine biosynthesis; spermidine biosynthesis; spermidine from putrescine: step 1/1. In terms of biological role, catalyzes the irreversible transfer of a propylamine group from the amino donor S-adenosylmethioninamine (decarboxy-AdoMet) to putrescine (1,4-diaminobutane) to yield spermidine. The polypeptide is Polyamine aminopropyltransferase 1 (Bacillus cereus (strain ATCC 14579 / DSM 31 / CCUG 7414 / JCM 2152 / NBRC 15305 / NCIMB 9373 / NCTC 2599 / NRRL B-3711)).